We begin with the raw amino-acid sequence, 426 residues long: Glutamate-1-semialdehyde 2,1-aminomutase (426 aa).

Lys265 carries the N6-(pyridoxal phosphate)lysine modification.

It belongs to the class-III pyridoxal-phosphate-dependent aminotransferase family. HemL subfamily. In terms of assembly, homodimer. It depends on pyridoxal 5'-phosphate as a cofactor.

It localises to the cytoplasm. It carries out the reaction (S)-4-amino-5-oxopentanoate = 5-aminolevulinate. Its pathway is porphyrin-containing compound metabolism; protoporphyrin-IX biosynthesis; 5-aminolevulinate from L-glutamyl-tRNA(Glu): step 2/2. This is Glutamate-1-semialdehyde 2,1-aminomutase (hemL) from Salmonella typhimurium (strain SL1344).